Here is a 704-residue protein sequence, read N- to C-terminus: Pentatricopeptide repeat-containing protein At1g56690, mitochondrial (704 aa).

A mitochondrion-targeting transit peptide spans 1–12; sequence MKRLKLILRRTY. 15 PPR repeats span residues 16-46, 47-81, 82-108, 109-143, 144-170, 171-205, 206-232, 233-267, 268-294, 295-329, 330-364, 365-395, 396-430, 431-465, and 467-497; these read TGVN…LQFK, AIGS…NVVS, WNGL…MPER, NVVS…NEVS, WTVM…MPVK, DVVA…NVVT, WTTM…MPEK, TEVS…PVIA, CNAM…MEDR, DNAT…GVRP, SFPS…QFDD, DVYV…FSSK, DIIM…GTMP, NKVT…FCVT, and TVEH…MTIK. A type E motif region spans residues 502–577; the sequence is VWGALLGACK…FPGCSWIEVG (76 aa). The type E(+) motif stretch occupies residues 578–609; the sequence is KKVHMFTRGGIKNHPEQAMILMMLEKTDGLLR. The segment at 610-704 is type DYW motif; it reads EAGYSPDCSH…NGECSCRDYW (95 aa).

Belongs to the PPR family. PCMP-H subfamily.

It localises to the mitochondrion. This Arabidopsis thaliana (Mouse-ear cress) protein is Pentatricopeptide repeat-containing protein At1g56690, mitochondrial (PCMP-H69).